A 146-amino-acid chain; its full sequence is Basic phospholipase A2 (146 aa).

An N-terminal signal peptide occupies residues 1 to 21 (MYPAHLLVLLAVCVSLLGAAS). The propeptide occupies 22-27 (IPPLPL). 7 disulfide bridges follow: Cys38-Cys98, Cys54-Cys145, Cys56-Cys72, Cys71-Cys126, Cys78-Cys119, Cys87-Cys112, and Cys105-Cys117. Ca(2+)-binding residues include Tyr55, Gly57, and Gly59. Residue His75 is part of the active site. Asp76 contacts Ca(2+). Asp120 is a catalytic residue.

It belongs to the phospholipase A2 family. Group I subfamily. D49 sub-subfamily. Ca(2+) serves as cofactor. In terms of tissue distribution, expressed by the venom gland.

Its subcellular location is the secreted. The catalysed reaction is a 1,2-diacyl-sn-glycero-3-phosphocholine + H2O = a 1-acyl-sn-glycero-3-phosphocholine + a fatty acid + H(+). Its function is as follows. Snake venom phospholipase A2 (PLA2) that inhibits neuromuscular transmission by blocking acetylcholine release from the nerve termini. PLA2 catalyzes the calcium-dependent hydrolysis of the 2-acyl groups in 3-sn-phosphoglycerides. The sequence is that of Basic phospholipase A2 from Hydrophis hardwickii (Hardwick's spine-bellied seasnake).